Consider the following 525-residue polypeptide: Cyclic AMP-responsive element-binding protein 3-like protein 2 (525 aa).

The Cytoplasmic segment spans residues 1–382; sequence MEIMESGDPV…SCKAAGTQTG (382 aa). Disordered stretches follow at residues 85–104, 203–267, and 309–338; these read LCGDSRPQSPFTHASSDDNF, EALQ…QGSG, and NKISAQESRRKKKEYMDSLEKRVENSSSEN. Polar residues-rich tracts occupy residues 90 to 102 and 213 to 239; these read RPQSPFTHASSDD and SSHGSDSEGGQSPTRSLPPSSPVQSQA. In terms of domain architecture, bZIP spans 299 to 362; that stretch reads ALKKIRRKIK…RTLLQQLQRL (64 aa). The tract at residues 301–330 is basic motif; sequence KKIRRKIKNKISAQESRRKKKEYMDSLEKR. The span at 322 to 332 shows a compositional bias: basic and acidic residues; it reads EYMDSLEKRVE. The leucine-zipper stretch occupies residues 341-362; that stretch reads LRKKVEVLESTNRTLLQQLQRL. Residues 383–403 form a helical; Signal-anchor for type II membrane protein membrane-spanning segment; the sequence is TCLMMVVLCFAVIFGSFTQNL. Residues 404 to 525 lie on the Lumenal side of the membrane; it reads DMYSSSSKTI…ELDRTVNTTS (122 aa). The S1P recognition motif lies at 433–436; it reads RKLL. N-linked (GlcNAc...) asparagine glycans are attached at residues Asn490, Asn509, and Asn522.

It belongs to the bZIP family. ATF subfamily. Binds DNA as a dimer. In terms of processing, upon ER stress, translocated to the Golgi apparatus, where it is processed by regulated intramembrane proteolysis (RIP) to release the cytosol-facing N-terminal transcription factor domain. The cleavage is performed sequentially by site-1 and site-2 proteases (S1P/mbtps1 and S2P/mbtps2).

The protein resides in the endoplasmic reticulum membrane. The protein localises to the nucleus. Functionally, transcription factor involved in unfolded protein response (UPR). In the absence of endoplasmic reticulum (ER) stress, inserted into ER membranes, with N-terminal DNA-binding and transcription activation domains oriented toward the cytosolic face of the membrane. In response to ER stress, transported to the Golgi, where it is cleaved in a site-specific manner by resident proteases S1P/mbtps1 and S2P/mbtps2. The released N-terminal cytosolic domain is translocated to the nucleus to effect transcription of specific target genes. Plays a critical role in chondrogenesis. May protect neuroblastoma cells from ER stress-induced death. In vitro activates transcription of target genes via direct binding to the CRE site. The protein is Cyclic AMP-responsive element-binding protein 3-like protein 2 (creb3l2) of Xenopus laevis (African clawed frog).